The primary structure comprises 162 residues: Urease subunit beta (162 aa).

Residues 116–162 (WRRSSAAGDAPQELPQVEAAERGRKLDDATDVDTNVGTEEGFEEGRN) form a disordered region. The span at 134 to 143 (AAERGRKLDD) shows a compositional bias: basic and acidic residues.

The protein belongs to the urease beta subunit family. Heterotrimer of UreA (gamma), UreB (beta) and UreC (alpha) subunits. Three heterotrimers associate to form the active enzyme.

Its subcellular location is the cytoplasm. It carries out the reaction urea + 2 H2O + H(+) = hydrogencarbonate + 2 NH4(+). It participates in nitrogen metabolism; urea degradation; CO(2) and NH(3) from urea (urease route): step 1/1. This is Urease subunit beta from Corynebacterium glutamicum (strain ATCC 13032 / DSM 20300 / JCM 1318 / BCRC 11384 / CCUG 27702 / LMG 3730 / NBRC 12168 / NCIMB 10025 / NRRL B-2784 / 534).